The following is a 386-amino-acid chain: MTLDDSSLQKYGFIKRETLGSINIDPLQTGGLLTEAARQALVEWGDGYSVCDFCGGVLDQIKKPPIHDFVHKALPEFLGCDEARVTNGARESKFAVMHSMGKPGDWIVLDGLAHYSSYVAAERAGLNVKVVPHAGSPEYYLDPEGYGTAIEEVTKESGKPPVLALVTYPDGSYGNIPDAGKIASVCHEYEVPLLLNGAYCVGRMPVSAKEIGADFIVGSGHKSMAASGPVGVLGVSEEYAPIVFRKSVYSKVKEVELLGCTARGATVMTMIASFPEVVKRVRNWDQEVENARWFSARLEDMGFIQRGQKPHSHDLMFFEAPGFYEISQKIKKGRYFLYKELKERNIHGIKSGLTKYFKLSTFGLGKEKLGVVADSFEEILKKYENV.

Residues 89-90 (AR), N196, and 219-221 (SGH) each bind pyridoxal 5'-phosphate. The residue at position 222 (K222) is an N6-(pyridoxal phosphate)lysine.

It belongs to the SepCysS family. Homodimer. Interacts with SepRS. Pyridoxal 5'-phosphate is required as a cofactor.

It carries out the reaction O-phospho-L-seryl-tRNA(Cys) + hydrogen sulfide + H(+) = L-cysteinyl-tRNA(Cys) + phosphate. Converts O-phospho-L-seryl-tRNA(Cys) (Sep-tRNA(Cys)) to L-cysteinyl-tRNA(Cys) (Cys-tRNA(Cys)). The protein is O-phospho-L-seryl-tRNA:Cys-tRNA synthase of Methanosarcina acetivorans (strain ATCC 35395 / DSM 2834 / JCM 12185 / C2A).